Here is a 721-residue protein sequence, read N- to C-terminus: Catalase-peroxidase 1 (721 aa).

Positions 98 to 223 (WHAAGSYRVA…LAAVQMGLIY (126 aa)) form a cross-link, tryptophyl-tyrosyl-methioninium (Trp-Tyr) (with M-249). The active-site Proton acceptor is histidine 99. Residues 223–249 (YVNPEGVNGQPDPLRTAQDVRVTFGRM) constitute a cross-link (tryptophyl-tyrosyl-methioninium (Tyr-Met) (with W-98)). Histidine 264 contributes to the heme b binding site.

It belongs to the peroxidase family. Peroxidase/catalase subfamily. In terms of assembly, homodimer or homotetramer. The cofactor is heme b. Post-translationally, formation of the three residue Trp-Tyr-Met cross-link is important for the catalase, but not the peroxidase activity of the enzyme.

The enzyme catalyses H2O2 + AH2 = A + 2 H2O. The catalysed reaction is 2 H2O2 = O2 + 2 H2O. Functionally, bifunctional enzyme with both catalase and broad-spectrum peroxidase activity. This Legionella pneumophila (strain Corby) protein is Catalase-peroxidase 1.